The chain runs to 201 residues: Large ribosomal subunit protein uL4 (201 aa).

Residues 45–71 (AQKTRAEVTGSGKKPWRQKGTGRARAG) are disordered.

The protein belongs to the universal ribosomal protein uL4 family. Part of the 50S ribosomal subunit.

Functionally, one of the primary rRNA binding proteins, this protein initially binds near the 5'-end of the 23S rRNA. It is important during the early stages of 50S assembly. It makes multiple contacts with different domains of the 23S rRNA in the assembled 50S subunit and ribosome. Forms part of the polypeptide exit tunnel. The polypeptide is Large ribosomal subunit protein uL4 (Shewanella oneidensis (strain ATCC 700550 / JCM 31522 / CIP 106686 / LMG 19005 / NCIMB 14063 / MR-1)).